The primary structure comprises 179 residues: Segregation and condensation protein B (179 aa).

It belongs to the ScpB family. Homodimer. Homodimerization may be required to stabilize the binding of ScpA to the Smc head domains. Component of a cohesin-like complex composed of ScpA, ScpB and the Smc homodimer, in which ScpA and ScpB bind to the head domain of Smc. The presence of the three proteins is required for the association of the complex with DNA.

It localises to the cytoplasm. In terms of biological role, participates in chromosomal partition during cell division. May act via the formation of a condensin-like complex containing Smc and ScpA that pull DNA away from mid-cell into both cell halves. In Streptococcus equi subsp. zooepidemicus (strain H70), this protein is Segregation and condensation protein B.